Consider the following 168-residue polypeptide: ATP synthase subunit b, sodium ion specific (168 aa).

A helical transmembrane segment spans residues 9 to 29 (VSIDINMFWQIINFLILMFFF).

Belongs to the ATPase B chain family. As to quaternary structure, F-type ATPases have 2 components, F(1) - the catalytic core - and F(0) - the membrane proton channel. F(1) has five subunits: alpha(3), beta(3), gamma(1), delta(1), epsilon(1). F(0) has three main subunits: a(1), b(2) and c(10-14). The alpha and beta chains form an alternating ring which encloses part of the gamma chain. F(1) is attached to F(0) by a central stalk formed by the gamma and epsilon chains, while a peripheral stalk is formed by the delta and b chains.

Its subcellular location is the cell inner membrane. In terms of biological role, f(1)F(0) ATP synthase produces ATP from ADP in the presence of a proton or sodium gradient. F-type ATPases consist of two structural domains, F(1) containing the extramembraneous catalytic core and F(0) containing the membrane proton channel, linked together by a central stalk and a peripheral stalk. During catalysis, ATP synthesis in the catalytic domain of F(1) is coupled via a rotary mechanism of the central stalk subunits to proton translocation. Functionally, component of the F(0) channel, it forms part of the peripheral stalk, linking F(1) to F(0). This is ATP synthase subunit b, sodium ion specific (atpF) from Propionigenium modestum.